The chain runs to 342 residues: MKTGFFLFAACAALVAVQAQEATNSTVKYIDYSSLKKFTRAPRTKAPPTKETTIQQSSLSGSQEQQQEQIETPAPTRVPAPTRPNPRATKAPTPAPTPAPTPAPTPAPTPAPTPAPTPDPGPWEAKWIDHDQVKPFAQPEPVTISEKAAVKYKPQIHIVNGCHPYPAVNEAGETSGGLKTKGAPSAGCKGSGWGSQVYGRSTWVRGVWAIMYSWYFPKDSPSSGLGHRHDWEHVIVWIDNPDIENPKILAVTPSAHSGYSKQVPPKADCVDGTSVKVKYESKWPVNHALDSTSEGGDFQDLIMWDQLSENARRAMNGVGWGKANTPFNDGNFLPKLDKAWPF.

The signal sequence occupies residues Met-1–Ala-19. Asn-24 carries N-linked (GlcNAc...) asparagine glycosylation. Positions Ala-41–Ala-125 are disordered. Residues Gln-55–Pro-75 are compositionally biased toward low complexity. A compositionally biased stretch (pro residues) spans Thr-93–Gly-121. The short motif at Gly-226–Glu-232 is the Hepta-peptide GHRHDWE motif element.

This sequence belongs to the Necrosis inducing protein (NPP1) family.

It is found in the secreted. Its function is as follows. Secreted effector that contributes strongly to virulence during infection by P.capsici. Induces cell death in the Solanaceae, including Nicotiana benthamiana. This Phytophthora capsici protein is NLP effector protein Pc107869.